The following is an 87-amino-acid chain: Exodeoxyribonuclease 7 small subunit (87 aa).

This sequence belongs to the XseB family. Heterooligomer composed of large and small subunits.

It is found in the cytoplasm. The enzyme catalyses Exonucleolytic cleavage in either 5'- to 3'- or 3'- to 5'-direction to yield nucleoside 5'-phosphates.. In terms of biological role, bidirectionally degrades single-stranded DNA into large acid-insoluble oligonucleotides, which are then degraded further into small acid-soluble oligonucleotides. In Serratia proteamaculans (strain 568), this protein is Exodeoxyribonuclease 7 small subunit.